The sequence spans 266 residues: Elongation factor Ts (266 aa).

The involved in Mg(2+) ion dislocation from EF-Tu stretch occupies residues 80 to 83 (TDFV).

It belongs to the EF-Ts family.

The protein localises to the cytoplasm. Associates with the EF-Tu.GDP complex and induces the exchange of GDP to GTP. It remains bound to the aminoacyl-tRNA.EF-Tu.GTP complex up to the GTP hydrolysis stage on the ribosome. The sequence is that of Elongation factor Ts from Buchnera aphidicola subsp. Baizongia pistaciae (strain Bp).